Reading from the N-terminus, the 465-residue chain is Chromosomal replication initiator protein DnaA (465 aa).

Positions Met-1–Pro-72 are domain I, interacts with DnaA modulators. Residues Pro-72–His-117 are domain II. Positions His-80–Gly-118 are disordered. A compositionally biased stretch (polar residues) spans Gly-103 to Pro-113. A domain III, AAA+ region region spans residues Gly-118–Ala-334. 4 residues coordinate ATP: Gly-162, Gly-164, Lys-165, and Thr-166. The domain IV, binds dsDNA stretch occupies residues Gln-335 to His-465.

The protein belongs to the DnaA family. As to quaternary structure, oligomerizes as a right-handed, spiral filament on DNA at oriC.

The protein resides in the cytoplasm. Its function is as follows. Plays an essential role in the initiation and regulation of chromosomal replication. ATP-DnaA binds to the origin of replication (oriC) to initiate formation of the DNA replication initiation complex once per cell cycle. Binds the DnaA box (a 9 base pair repeat at the origin) and separates the double-stranded (ds)DNA. Forms a right-handed helical filament on oriC DNA; dsDNA binds to the exterior of the filament while single-stranded (ss)DNA is stabiized in the filament's interior. The ATP-DnaA-oriC complex binds and stabilizes one strand of the AT-rich DNA unwinding element (DUE), permitting loading of DNA polymerase. After initiation quickly degrades to an ADP-DnaA complex that is not apt for DNA replication. Binds acidic phospholipids. In Thermomicrobium roseum (strain ATCC 27502 / DSM 5159 / P-2), this protein is Chromosomal replication initiator protein DnaA.